Here is a 608-residue protein sequence, read N- to C-terminus: Auxin response factor 3 (608 aa).

Positions 1-40 are disordered; the sequence is MGGLIDLNVMETEEDETQTQTPSSASGSVSPTSSSSASVS. Low complexity predominate over residues 18–40; sequence QTQTPSSASGSVSPTSSSSASVS. Residues 159-261 constitute a DNA-binding region (TF-B3); that stretch reads FCKTLTASDT…KLRLGVRRAS (103 aa).

This sequence belongs to the ARF family. Homo and heterodimers. As to expression, expressed in the whole plant.

It localises to the nucleus. Functionally, auxin response factors (ARFs) are transcriptional factors that bind specifically to the DNA sequence 5'-TGTCTC-3' found in the auxin-responsive promoter elements (AuxREs). Could act as transcriptional activator or repressor. Formation of heterodimers with Aux/IAA proteins may alter their ability to modulate early auxin response genes expression. Involved in the establishment or elaboration of tissue patterning during gynoecial development. In Arabidopsis thaliana (Mouse-ear cress), this protein is Auxin response factor 3 (ARF3).